Consider the following 387-residue polypeptide: Probable 1-alkyl-2-acetylglycerophosphocholine esterase (387 aa).

The signal sequence occupies residues 1-17 (MLVQGTIICALVANAIA). 2 N-linked (GlcNAc...) asparagine glycosylation sites follow: Asn51 and Asn141. Ser227 serves as the catalytic Nucleophile. The active-site Charge relay system is the Asp250. A glycan (N-linked (GlcNAc...) asparagine) is linked at Asn283. Catalysis depends on His313, which acts as the Charge relay system.

Belongs to the AB hydrolase superfamily. Lipase family.

It is found in the secreted. It catalyses the reaction a 1-O-alkyl-2-acetyl-sn-glycero-3-phosphocholine + H2O = a 1-O-alkyl-sn-glycero-3-phosphocholine + acetate + H(+). In Arthroderma benhamiae (strain ATCC MYA-4681 / CBS 112371) (Trichophyton mentagrophytes), this protein is Probable 1-alkyl-2-acetylglycerophosphocholine esterase.